We begin with the raw amino-acid sequence, 392 residues long: Imidazolonepropionase (392 aa).

Residues His69 and His71 each contribute to the Fe(3+) site. Zn(2+)-binding residues include His69 and His71. Arg78, Tyr136, and His163 together coordinate 4-imidazolone-5-propanoate. Tyr136 contributes to the N-formimidoyl-L-glutamate binding site. Fe(3+) is bound at residue His226. His226 serves as a coordination point for Zn(2+). Gln229 provides a ligand contact to 4-imidazolone-5-propanoate. Position 302 (Asp302) interacts with Fe(3+). Asp302 contributes to the Zn(2+) binding site. 2 residues coordinate N-formimidoyl-L-glutamate: Asn304 and Gly306. Ser307 is a binding site for 4-imidazolone-5-propanoate.

It belongs to the metallo-dependent hydrolases superfamily. HutI family. The cofactor is Zn(2+). Fe(3+) serves as cofactor.

Its subcellular location is the cytoplasm. It carries out the reaction 4-imidazolone-5-propanoate + H2O = N-formimidoyl-L-glutamate. The protein operates within amino-acid degradation; L-histidine degradation into L-glutamate; N-formimidoyl-L-glutamate from L-histidine: step 3/3. In terms of biological role, catalyzes the hydrolytic cleavage of the carbon-nitrogen bond in imidazolone-5-propanoate to yield N-formimidoyl-L-glutamate. It is the third step in the universal histidine degradation pathway. The polypeptide is Imidazolonepropionase (Salinispora arenicola (strain CNS-205)).